Here is a 904-residue protein sequence, read N- to C-terminus: Endoplasmic reticulum metallopeptidase 1 (904 aa).

Met-1 carries the post-translational modification N-acetylmethionine. The Cytoplasmic segment spans residues Met-1–Gly-63. A disordered region spans residues Met-1–Gly-65. Residues Gly-55–Gly-65 show a composition bias toward gly residues. A helical transmembrane segment spans residues Ala-64–Leu-84. At Arg-85–Met-399 the chain is on the lumenal side. The N-linked (GlcNAc...) asparagine glycan is linked to Asn-182. Cys-204 and Cys-222 form a disulfide bridge. Zn(2+) contacts are provided by His-205 and Asp-217. Catalysis depends on Glu-251, which acts as the Proton acceptor. 3 residues coordinate Zn(2+): Glu-252, Glu-278, and His-354. A helical membrane pass occupies residues Val-400–Ile-420. At Asn-421–Thr-457 the chain is on the cytoplasmic side. The helical transmembrane segment at Leu-458–Ile-478 threads the bilayer. Residues Gly-479–Tyr-489 are Lumenal-facing. A helical membrane pass occupies residues Val-490–Ala-510. Topologically, residues Lys-511 to Ser-519 are cytoplasmic. Residues Ala-520–Val-540 traverse the membrane as a helical segment. A topological domain (lumenal) is located at residue Thr-541. The chain crosses the membrane as a helical span at residues Leu-542–Leu-562. Residues Thr-563 to Lys-579 lie on the Cytoplasmic side of the membrane. The helical transmembrane segment at Phe-580–Trp-600 threads the bilayer. The Lumenal portion of the chain corresponds to Ala-601 to Val-621. The helical transmembrane segment at Val-622–Ile-642 threads the bilayer. Over Tyr-643–Thr-651 the chain is Cytoplasmic. A helical transmembrane segment spans residues Met-652–Phe-672. The Lumenal segment spans residues Pro-673–Phe-904. An N-linked (GlcNAc...) asparagine glycan is attached at Asn-730.

This sequence belongs to the peptidase M28 family. Zn(2+) serves as cofactor.

It is found in the endoplasmic reticulum membrane. Within the ovary, required for the organization of somatic cells and oocytes into discrete follicular structures. The polypeptide is Endoplasmic reticulum metallopeptidase 1 (Homo sapiens (Human)).